We begin with the raw amino-acid sequence, 104 residues long: MIRKAFVMQVNADAHEEYQRRHNPIWPELEAVLKSHGAHHYAIYLDQERNLLFATVEIESEERWNAVASTDVCQRWWKHMRDVMPANPDNSPVNAELKEVFYLQ.

A substrate-binding site is contributed by Tyr18. His22 (proton donor) is an active-site residue. Residues Tyr41 and 76 to 77 (WW) each bind substrate.

It belongs to the rhamnose mutarotase family. In terms of assembly, homodimer.

It is found in the cytoplasm. It catalyses the reaction alpha-L-rhamnose = beta-L-rhamnose. It participates in carbohydrate metabolism; L-rhamnose metabolism. Functionally, involved in the anomeric conversion of L-rhamnose. The sequence is that of L-rhamnose mutarotase from Salmonella heidelberg (strain SL476).